The primary structure comprises 306 residues: MERLQRLMMNSKVGSADTGRDDTKETVYISSIALLKMLKHGRAGVPMEVMGLMLGEFVDDYTVNVVDVFAMPQSGTGVSVEAVDDVFQAKMMDMLKQTGRDQMVVGWYHSHPGFGCWLSSVDVNTQKSFEQLNSRAVAVVVDPIQSVKGKVVIDAFRLIDTGALINNLEPRQTTSNTGLLNKANIQALIHGLNRHYYSLNIDYHKTAKETKMLMNLHKEQWQSGLKMYDYEEKEESNLAATKSMVKIAEQYSKRIEEEKELTEEELKTRYVGRQDPKKHLSETADETLENNIVSVLTAGVNSVAIK.

Position 1 is an N-acetylmethionine (M1). Residues 1-20 (MERLQRLMMNSKVGSADTGR) form a disordered region. The MPN domain maps to 27-162 (VYISSIALLK…IDAFRLIDTG (136 aa)). The Zn(2+) site is built by H109, H111, and D122. The JAMM motif motif lies at 109-122 (HSHPGFGCWLSSVD).

Belongs to the peptidase M67A family. Component of the lid subcomplex of the 19S proteasome regulatory particle complex (also named PA700 complex). The 26S proteasome consists of a 20S proteasome core and two 19S regulatory subunits. Interacts directly with RPN8 and STS1. In terms of processing, N-acetylated by NAT3.

The catalysed reaction is Thiol-dependent hydrolysis of ester, thioester, amide, peptide and isopeptide bonds formed by the C-terminal Gly of ubiquitin (a 76-residue protein attached to proteins as an intracellular targeting signal).. Its function is as follows. Component of the lid subcomplex of the 26S proteasome, a multiprotein complex involved in the ATP-dependent degradation of ubiquitinated proteins. RPN11 is the only catalytically active member of the lid and serves as the essential deubiquitinase of the proteasome. This chain is Ubiquitin carboxyl-terminal hydrolase RPN11 (RPN11), found in Saccharomyces cerevisiae (strain ATCC 204508 / S288c) (Baker's yeast).